We begin with the raw amino-acid sequence, 264 residues long: Thymidylate synthase (264 aa).

Arg21 serves as a coordination point for dUMP. His51 lines the (6R)-5,10-methylene-5,6,7,8-tetrahydrofolate pocket. 126 to 127 (RR) contributes to the dUMP binding site. Cys146 serves as the catalytic Nucleophile. DUMP is bound by residues 166 to 169 (RSCD), Asn177, and 207 to 209 (HLY). Residue Asp169 coordinates (6R)-5,10-methylene-5,6,7,8-tetrahydrofolate. Ala263 serves as a coordination point for (6R)-5,10-methylene-5,6,7,8-tetrahydrofolate.

The protein belongs to the thymidylate synthase family. Bacterial-type ThyA subfamily. In terms of assembly, homodimer.

Its subcellular location is the cytoplasm. The catalysed reaction is dUMP + (6R)-5,10-methylene-5,6,7,8-tetrahydrofolate = 7,8-dihydrofolate + dTMP. Its pathway is pyrimidine metabolism; dTTP biosynthesis. In terms of biological role, catalyzes the reductive methylation of 2'-deoxyuridine-5'-monophosphate (dUMP) to 2'-deoxythymidine-5'-monophosphate (dTMP) while utilizing 5,10-methylenetetrahydrofolate (mTHF) as the methyl donor and reductant in the reaction, yielding dihydrofolate (DHF) as a by-product. This enzymatic reaction provides an intracellular de novo source of dTMP, an essential precursor for DNA biosynthesis. The sequence is that of Thymidylate synthase from Shewanella baltica (strain OS223).